Consider the following 397-residue polypeptide: Riboflavin biosynthesis protein RibBA (397 aa).

Residues 1–199 form a DHBP synthase region; that stretch reads MFHRIEEALE…IEDLIAYRRH (199 aa). D-ribulose 5-phosphate is bound by residues 26 to 27, Asp31, 138 to 142, and Glu162; these read RE and RAGHT. Position 27 (Glu27) interacts with Mg(2+). His141 provides a ligand contact to Mg(2+). A GTP cyclohydrolase II region spans residues 200-397; sequence HETLVTREVE…VNKLGHLLNL (198 aa). GTP is bound at residue 250-254; sequence RVHSE. Zn(2+)-binding residues include Cys255, Cys266, and Cys268. Residues Gln271, 293–295, and Thr315 contribute to the GTP site; that span reads EGR. Asp327 functions as the Proton acceptor; for GTP cyclohydrolase activity in the catalytic mechanism. Arg329 functions as the Nucleophile; for GTP cyclohydrolase activity in the catalytic mechanism. The GTP site is built by Thr350 and Lys355.

In the N-terminal section; belongs to the DHBP synthase family. This sequence in the C-terminal section; belongs to the GTP cyclohydrolase II family. It depends on Mg(2+) as a cofactor. Mn(2+) is required as a cofactor. The cofactor is Zn(2+).

It carries out the reaction D-ribulose 5-phosphate = (2S)-2-hydroxy-3-oxobutyl phosphate + formate + H(+). The enzyme catalyses GTP + 4 H2O = 2,5-diamino-6-hydroxy-4-(5-phosphoribosylamino)-pyrimidine + formate + 2 phosphate + 3 H(+). It functions in the pathway cofactor biosynthesis; riboflavin biosynthesis; 2-hydroxy-3-oxobutyl phosphate from D-ribulose 5-phosphate: step 1/1. The protein operates within cofactor biosynthesis; riboflavin biosynthesis; 5-amino-6-(D-ribitylamino)uracil from GTP: step 1/4. Its function is as follows. Catalyzes the conversion of D-ribulose 5-phosphate to formate and 3,4-dihydroxy-2-butanone 4-phosphate. In terms of biological role, catalyzes the conversion of GTP to 2,5-diamino-6-ribosylamino-4(3H)-pyrimidinone 5'-phosphate (DARP), formate and pyrophosphate. This Bacillus cereus (strain B4264) protein is Riboflavin biosynthesis protein RibBA.